The sequence spans 146 residues: Ribosome-binding factor A (146 aa).

The disordered stretch occupies residues 113–146; that stretch reads IRDEREAQEPAQDPAQDSSQDASVEASDAPDKAE.

Belongs to the RbfA family. As to quaternary structure, monomer. Binds 30S ribosomal subunits, but not 50S ribosomal subunits or 70S ribosomes.

The protein resides in the cytoplasm. In terms of biological role, one of several proteins that assist in the late maturation steps of the functional core of the 30S ribosomal subunit. Associates with free 30S ribosomal subunits (but not with 30S subunits that are part of 70S ribosomes or polysomes). Required for efficient processing of 16S rRNA. May interact with the 5'-terminal helix region of 16S rRNA. The polypeptide is Ribosome-binding factor A (Gemmatimonas aurantiaca (strain DSM 14586 / JCM 11422 / NBRC 100505 / T-27)).